The chain runs to 292 residues: GTP cyclohydrolase FolE2 (292 aa).

Belongs to the GTP cyclohydrolase IV family.

The catalysed reaction is GTP + H2O = 7,8-dihydroneopterin 3'-triphosphate + formate + H(+). It participates in cofactor biosynthesis; 7,8-dihydroneopterin triphosphate biosynthesis; 7,8-dihydroneopterin triphosphate from GTP: step 1/1. In terms of biological role, converts GTP to 7,8-dihydroneopterin triphosphate. The chain is GTP cyclohydrolase FolE2 from Staphylococcus aureus (strain MRSA252).